Reading from the N-terminus, the 320-residue chain is ATP-dependent 6-phosphofructokinase (320 aa).

Residues glycine 12, 73-74, and 103-106 each bind ATP; these read RF and GDGS. Aspartate 104 serves as a coordination point for Mg(2+). 126–128 provides a ligand contact to substrate; the sequence is TID. Aspartate 128 acts as the Proton acceptor in catalysis. Position 155 (arginine 155) interacts with ADP. Substrate-binding positions include arginine 163 and 170–172; that span reads MGR. Residues 186–188 and lysine 212 each bind ADP; that span reads GCE. Substrate-binding positions include glutamate 223, arginine 244, and 250-253; that span reads HIQR.

This sequence belongs to the phosphofructokinase type A (PFKA) family. ATP-dependent PFK group I subfamily. Prokaryotic clade 'B1' sub-subfamily. Homotetramer. Requires Mg(2+) as cofactor.

Its subcellular location is the cytoplasm. The enzyme catalyses beta-D-fructose 6-phosphate + ATP = beta-D-fructose 1,6-bisphosphate + ADP + H(+). The protein operates within carbohydrate degradation; glycolysis; D-glyceraldehyde 3-phosphate and glycerone phosphate from D-glucose: step 3/4. Allosterically activated by ADP and other diphosphonucleosides, and allosterically inhibited by phosphoenolpyruvate. Its function is as follows. Catalyzes the phosphorylation of D-fructose 6-phosphate to fructose 1,6-bisphosphate by ATP, the first committing step of glycolysis. The protein is ATP-dependent 6-phosphofructokinase of Buchnera aphidicola subsp. Cinara cedri (strain Cc).